We begin with the raw amino-acid sequence, 662 residues long: Pro-neuregulin-1, membrane-bound isoform (662 aa).

Residues 1 to 13 (MSERKEGRGKGKG) constitute a propeptide that is removed on maturation. Residues 1–52 (MSERKEGRGKGKGKKKDRGSRGKPGPAEGDPSPALPPRLKEMKSQESAAGSK) form a disordered region. The Extracellular segment spans residues 14-265 (KKKDRGSRGK…SKAEELYQKR (252 aa)). One can recognise an Ig-like C2-type domain in the interval 37-128 (PRLKEMKSQE…GNDSASANIT (92 aa)). Residues Cys-57 and Cys-112 are joined by a disulfide bond. 3 N-linked (GlcNAc...) asparagine glycosylation sites follow: Asn-120, Asn-126, and Asn-164. The EGF-like domain occupies 178 to 222 (HLIKCAEKEKTFCVNGGECFTVKDLSNPSRYLCKCPNEFTGDRCQ). Cystine bridges form between Cys-182-Cys-196, Cys-190-Cys-210, and Cys-212-Cys-221. A helical membrane pass occupies residues 266–288 (VLTITGICIALLVVGIMCVVAYC). The Cytoplasmic segment spans residues 289 to 662 (KTKKQRQKLH…VIANQDPIAV (374 aa)). The segment covering 358 to 373 (SHYTSTAHHSTTVTQT) has biased composition (low complexity). 3 disordered regions span residues 358 to 383 (SHYT…NGHT), 398 to 480 (SVEN…PVSS), and 547 to 610 (YETT…DTPF). The span at 374–383 (PSHSWSNGHT) shows a compositional bias: polar residues. Positions 410 to 420 (GPRGRLHGLGG) are enriched in gly residues. Over residues 425–445 (SFLRHARETPDSYRDSPHSER) the composition is skewed to basic and acidic residues. Over residues 564-574 (TNSRRAKRTKP) the composition is skewed to basic residues. Residues 585 to 596 (DSNTSSVSSNSE) are compositionally biased toward low complexity.

It belongs to the neuregulin family. In terms of assembly, the cytoplasmic domain interacts with the LIM domain region of LIMK1. Forms a ternary complex with ERBB3 and ITGAV:ITGB3 or ITGA6:ITGB4. Interacts with NRDC and BACE1. In terms of processing, proteolytic cleavage close to the plasma membrane on the external face leads to the release of the soluble growth factor form. Post-translationally, N- and O-glycosylated. Extensive glycosylation precedes the proteolytic cleavage. Widely expressed. Most tissues contain isoform alpha2A and isoform alpha2B. Isoform Alpha2 and isoform beta2 are the predominant forms in mesenchymal and non-neuronal organs. Isoform Beta1 is enriched in brain and spinal cord, but not in muscle and heart. Isoform Alpha2C is highly expressed in spinal cord, moderately in lung, brain, ovary, and stomach, in low amounts in the kidney, skin and heart and not detected in the liver, spleen, and placenta.

The protein localises to the cell membrane. It localises to the secreted. Functionally, direct ligand for ERBB3 and ERBB4 tyrosine kinase receptors. Concomitantly recruits ERBB1 and ERBB2 coreceptors, resulting in ligand-stimulated tyrosine phosphorylation and activation of the ERBB receptors. The multiple isoforms perform diverse functions such as inducing growth and differentiation of epithelial, glial, neuronal, and skeletal muscle cells; inducing expression of acetylcholine receptor in synaptic vesicles during the formation of the neuromuscular junction; stimulating lobuloalveolar budding and milk production in the mammary gland and inducing differentiation of mammary tumor cells; stimulating Schwann cell proliferation; implication in the development of the myocardium such as trabeculation of the developing heart. Binds to ERBB4 and ERBB3. Acts as a ligand for integrins and binds (via EGF domain) to integrins ITGAV:ITGB3 or ITGA6:ITGB4. Its binding to integrins and subsequent ternary complex formation with integrins and ERRB3 are essential for NRG1-ERBB signaling. Induces the phosphorylation and activation of MAPK3/ERK1, MAPK1/ERK2 and AKT1, and ligand-dependent ERBB4 endocytosis is essential for the NRG1-mediated activation of these kinases in neurons. This chain is Pro-neuregulin-1, membrane-bound isoform (Nrg1), found in Rattus norvegicus (Rat).